Reading from the N-terminus, the 256-residue chain is 5-keto-4-deoxy-D-glucarate aldolase (256 aa).

His50 serves as the catalytic Proton acceptor. Gln151 contributes to the substrate binding site. Glu153 contributes to the Mg(2+) binding site. Ser178 and Asp179 together coordinate substrate. Asp179 is a Mg(2+) binding site.

This sequence belongs to the HpcH/HpaI aldolase family. KDGluc aldolase subfamily. As to quaternary structure, homohexamer; trimer of dimers. Requires Mg(2+) as cofactor.

The catalysed reaction is 5-dehydro-4-deoxy-D-glucarate = 2-hydroxy-3-oxopropanoate + pyruvate. It carries out the reaction 2-dehydro-3-deoxy-D-glucarate = 2-hydroxy-3-oxopropanoate + pyruvate. Its pathway is carbohydrate acid metabolism; galactarate degradation; D-glycerate from galactarate: step 2/3. Catalyzes the reversible retro-aldol cleavage of both 5-keto-4-deoxy-D-glucarate and 2-keto-3-deoxy-D-glucarate to pyruvate and tartronic semialdehyde. The protein is 5-keto-4-deoxy-D-glucarate aldolase of Salmonella paratyphi C (strain RKS4594).